Consider the following 464-residue polypeptide: DNA repair protein KRE29 (464 aa).

Residues 1-69 are disordered; it reads MGSVNSSPNE…SDEEFSSLEN (69 aa). The segment covering 53-65 has biased composition (acidic residues); that stretch reads PENDSLNSDEEFS. Phosphoserine is present on residues Ser81 and Ser101.

In terms of assembly, component of the Smc5-Smc6 complex which consists of KRE29, MMS21, NSE1, NSE3, NSE4, NSE5, SMC5 and SMC6. Interacts with NSE5.

It is found in the nucleus. It localises to the cytoplasm. Acts in a DNA repair pathway for removal of UV-induced DNA damage that is distinct from classical nucleotide excision repair and in repair of ionizing radiation damage. Functions in homologous recombination repair of DNA double strand breaks and in recovery of stalled replication forks. This chain is DNA repair protein KRE29 (KRE29), found in Saccharomyces cerevisiae (strain ATCC 204508 / S288c) (Baker's yeast).